The chain runs to 875 residues: GATOR2 complex protein MIOS (875 aa).

6 WD repeats span residues 61–100 (PYMKCVACYLNYDPECLLAVGQANGRVVLTSLGQDHNSKF), 111–155 (KHAR…TPDI), 182–221 (GQNDACLSLCWLPRDQKLLLAGMHRNLAIFDLRNTSQKMF), 223–261 (NTKAVQGVTVDPYFHDRVASFYEGQVAIWDLRKFEKPVL), 265–306 (EQPK…TPIG), and 395–437 (RLRA…KQYT). The C4-type zinc-finger motif lies at 735 to 781 (VSCNFCGKSISYSCSAVPHQGRGFSQYGVSGSPTKSKVTSCPGCRKP). The Zn(2+) site is built by Cys-737 and Cys-740. Ser-759 and Ser-766 each carry phosphoserine. 11 residues coordinate Zn(2+): Cys-775, Cys-778, Cys-788, Cys-827, Cys-830, His-832, His-835, His-838, Cys-849, Cys-854, and Cys-858. The RING-type; atypical zinc-finger motif lies at 782 to 863 (LPRCALCLIN…CTCKCMQLDT (82 aa)).

The protein belongs to the WD repeat mio family. Component of the GATOR2 subcomplex, composed of MIOS, SEC13, SEH1L, WDR24 and WDR59. The GATOR2 complex interacts with CASTOR1 and CASTOR2; the interaction is negatively regulated by arginine. CASTOR1 and CASTOR2 convey leucine availability via direct interaction with MIOS. The GATOR2 complex interacts with SESN1, SESN2 and SESN3; the interaction is negatively regulated by amino acids. Interacts with SAR1A and SAR1B; the interaction is direct, disrupted by leucine and mediates the interaction of SAR1A or SAR1B with the GATOR2 complex to negatively regulate the TORC1 signaling upon leucine deprivation.

The protein localises to the lysosome membrane. With respect to regulation, the GATOR2 complex is negatively regulated by the upstream amino acid sensors CASTOR1 and SESN2, which sequester the GATOR2 complex in absence of amino acids. In the presence of abundant amino acids, GATOR2 is released from CASTOR1 and SESN2 and activated. As a component of the GATOR2 complex, functions as an activator of the amino acid-sensing branch of the mTORC1 signaling pathway. The GATOR2 complex indirectly activates mTORC1 through the inhibition of the GATOR1 subcomplex. GATOR2 probably acts as an E3 ubiquitin-protein ligase toward GATOR1. In the presence of abundant amino acids, the GATOR2 complex mediates ubiquitination of the NPRL2 core component of the GATOR1 complex, leading to GATOR1 inactivation. In the absence of amino acids, GATOR2 is inhibited, activating the GATOR1 complex. Within the GATOR2 complex, MIOS is required to prevent autoubiquitination of WDR24, the catalytic subunit of the complex. The GATOR2 complex is required for brain myelination. This is GATOR2 complex protein MIOS from Pongo abelii (Sumatran orangutan).